Here is a 240-residue protein sequence, read N- to C-terminus: Guanine nucleotide exchange factor sopE2 (240 aa).

Residues 78 to 240 (LTSKTVKDFM…IANKYLQNAS (163 aa)) are GEF catalytic domain.

It belongs to the GEF (guanine exchange factor) SopE family.

It is found in the secreted. In terms of biological role, activator for CDC42 by directly engaging this Rho GTPase and acting as potent guanine nucleotide exchange factor (GEF). This activation results in actin cytoskeleton rearrangements and stimulates membrane ruffling, promoting bacterial entry into non-phagocytic cells. Also activates NF-kB, p38 and ERK kinases, which are known to be involved in the induction of IL-8 expression. Chaperone InvB is required for secretion, translocation and stabilization of intracellular levels of sopE2. The sequence is that of Guanine nucleotide exchange factor sopE2 (sopE2) from Salmonella typhimurium (strain LT2 / SGSC1412 / ATCC 700720).